A 352-amino-acid polypeptide reads, in one-letter code: tRNA pseudouridine synthase D (352 aa).

Catalysis depends on Asp-78, which acts as the Nucleophile. Residues 153–299 (GVPNYYGEQR…LDQDRRPLLL (147 aa)) form the TRUD domain.

The protein belongs to the pseudouridine synthase TruD family.

It carries out the reaction uridine(13) in tRNA = pseudouridine(13) in tRNA. In terms of biological role, responsible for synthesis of pseudouridine from uracil-13 in transfer RNAs. The polypeptide is tRNA pseudouridine synthase D (Aeromonas hydrophila subsp. hydrophila (strain ATCC 7966 / DSM 30187 / BCRC 13018 / CCUG 14551 / JCM 1027 / KCTC 2358 / NCIMB 9240 / NCTC 8049)).